Reading from the N-terminus, the 579-residue chain is Probable receptor-like serine/threonine-protein kinase At5g57670 (579 aa).

Position 256 is a phosphothreonine (threonine 256). In terms of domain architecture, Protein kinase spans 267–542 (FHQGNIVGIG…LLTNGNEAEI (276 aa)). Residues 273–281 (VGIGGYSEV) and lysine 295 each bind ATP. The Proton acceptor role is filled by aspartate 392. Serine 396 is subject to Phosphoserine. A Phosphothreonine modification is found at threonine 432.

The protein belongs to the protein kinase superfamily. Ser/Thr protein kinase family.

The enzyme catalyses L-seryl-[protein] + ATP = O-phospho-L-seryl-[protein] + ADP + H(+). It catalyses the reaction L-threonyl-[protein] + ATP = O-phospho-L-threonyl-[protein] + ADP + H(+). The chain is Probable receptor-like serine/threonine-protein kinase At5g57670 from Arabidopsis thaliana (Mouse-ear cress).